The chain runs to 200 residues: Small ribosomal subunit protein eS1 (200 aa).

This sequence belongs to the eukaryotic ribosomal protein eS1 family.

The polypeptide is Small ribosomal subunit protein eS1 (Thermococcus onnurineus (strain NA1)).